The sequence spans 376 residues: Succinyl-diaminopimelate desuccinylase (376 aa).

Position 74 (H74) interacts with Zn(2+). The active site involves D76. Zn(2+) is bound at residue D105. The active-site Proton acceptor is E135. Zn(2+) contacts are provided by E136, E164, and H349.

This sequence belongs to the peptidase M20A family. DapE subfamily. In terms of assembly, homodimer. The cofactor is Zn(2+). Co(2+) serves as cofactor.

The catalysed reaction is N-succinyl-(2S,6S)-2,6-diaminopimelate + H2O = (2S,6S)-2,6-diaminopimelate + succinate. It participates in amino-acid biosynthesis; L-lysine biosynthesis via DAP pathway; LL-2,6-diaminopimelate from (S)-tetrahydrodipicolinate (succinylase route): step 3/3. Functionally, catalyzes the hydrolysis of N-succinyl-L,L-diaminopimelic acid (SDAP), forming succinate and LL-2,6-diaminopimelate (DAP), an intermediate involved in the bacterial biosynthesis of lysine and meso-diaminopimelic acid, an essential component of bacterial cell walls. The polypeptide is Succinyl-diaminopimelate desuccinylase (Zymomonas mobilis subsp. mobilis (strain ATCC 31821 / ZM4 / CP4)).